The primary structure comprises 459 residues: tRNA modification GTPase MnmE (459 aa).

3 residues coordinate (6S)-5-formyl-5,6,7,8-tetrahydrofolate: Arg25, Glu87, and Arg126. The TrmE-type G domain occupies 221–380 (GLKVAIVGRP…LETAILEIVQ (160 aa)). A K(+)-binding site is contributed by Asn231. GTP-binding positions include 231 to 236 (NVGKSS), 250 to 256 (TDLPGTT), and 275 to 278 (DTAG). Ser235 contributes to the Mg(2+) binding site. K(+) is bound by residues Thr250, Leu252, and Thr255. Residue Thr256 coordinates Mg(2+). Lys459 serves as a coordination point for (6S)-5-formyl-5,6,7,8-tetrahydrofolate.

The protein belongs to the TRAFAC class TrmE-Era-EngA-EngB-Septin-like GTPase superfamily. TrmE GTPase family. Homodimer. Heterotetramer of two MnmE and two MnmG subunits. K(+) serves as cofactor.

It is found in the cytoplasm. In terms of biological role, exhibits a very high intrinsic GTPase hydrolysis rate. Involved in the addition of a carboxymethylaminomethyl (cmnm) group at the wobble position (U34) of certain tRNAs, forming tRNA-cmnm(5)s(2)U34. The sequence is that of tRNA modification GTPase MnmE from Nostoc sp. (strain PCC 7120 / SAG 25.82 / UTEX 2576).